A 170-amino-acid chain; its full sequence is Adenine phosphoribosyltransferase (170 aa).

The protein belongs to the purine/pyrimidine phosphoribosyltransferase family. Homodimer.

The protein resides in the cytoplasm. The catalysed reaction is AMP + diphosphate = 5-phospho-alpha-D-ribose 1-diphosphate + adenine. Its pathway is purine metabolism; AMP biosynthesis via salvage pathway; AMP from adenine: step 1/1. In terms of biological role, catalyzes a salvage reaction resulting in the formation of AMP, that is energically less costly than de novo synthesis. The chain is Adenine phosphoribosyltransferase from Mesoplasma florum (strain ATCC 33453 / NBRC 100688 / NCTC 11704 / L1) (Acholeplasma florum).